Here is a 405-residue protein sequence, read N- to C-terminus: Deoxyguanosinetriphosphate triphosphohydrolase-like protein (405 aa).

Residues 75–219 (RLTHTIEVAQ…AAIADDIAYN (145 aa)) enclose the HD domain.

It belongs to the dGTPase family. Type 2 subfamily.

The chain is Deoxyguanosinetriphosphate triphosphohydrolase-like protein from Rhizobium etli (strain ATCC 51251 / DSM 11541 / JCM 21823 / NBRC 15573 / CFN 42).